Here is a 359-residue protein sequence, read N- to C-terminus: Probable F-box protein At3g61730 (359 aa).

2 stretches are compositionally biased toward basic and acidic residues: residues 1–14 and 37–48; these read MKTR…DSRG and QKNDIQREEDGR. The segment at 1 to 60 is disordered; sequence MKTRSSDAEGDSRGKMIAPVGEGNGGRKRKLVQSNEQKNDIQREEDGRAKRRIVQSSDQK. Positions 82-128 constitute an F-box; degenerate domain; the sequence is QSRFSWYEQDIWTYISRFLDGKSLVKLGATNKWFYKIAMEDTVWRFA.

As to quaternary structure, interacts with SKP1A. As to expression, expressed in flower buds, developing anthers, pollen grains, siliques, rosette leaves and roots. Detected at lower levels in open flowers, stems and cauline leaves. Expressed in young seedling in the hydathodes, shoot apical meristem, root tips and lateral root primordia.

It is found in the nucleus. Functionally, regulates tapetum degeneration and pollen maturation during anther development. The sequence is that of Probable F-box protein At3g61730 (RMF) from Arabidopsis thaliana (Mouse-ear cress).